Consider the following 1382-residue polypeptide: Eukaryotic translation initiation factor 3 subunit A (1382 aa).

Residue Lys-68 is modified to N6-acetyllysine. A coiled-coil region spans residues 82-120 (NIKSLEDVVRAYLKMAEEKTEAAKEESQQMVLDIEDLDN). The PCI domain occupies 315–498 (MQRMSTRVLL…RTLSFGSDLN (184 aa)). A phosphoserine mark is found at Ser-492 and Ser-584. Residues 664 to 835 (LDPDFIMAKQ…REERERAERA (172 aa)) form an interaction with EIF3B region. Disordered stretches follow at residues 810 to 844 (KEEE…LREY) and 866 to 1382 (EERE…TVRR). Basic and acidic residues-rich tracts occupy residues 866–1165 (EERE…DDSR), 1177–1328 (GWRE…DPPR), and 1336–1371 (SRDR…TKNE). A phosphoserine mark is found at Ser-881, Ser-882, and Ser-895. Copy 1 of the repeat occupies 925–934 (DEDRSHRRDE). The interval 925–1172 (DEDRSHRRDE…DSRPGPWRPL (248 aa)) is 25 X 10 AA approximate tandem repeats of [DE]-[DE]-[DE]-R-[SEVGFPILV]-[HPSN]-[RSW]-[RL]-[DRGTIHN]-[EPMANLGDT]. One copy of the 2; truncated repeat lies at 935–942 (ERPRRLGD). Tandem repeats lie at residues 943–952 (DEDREPSLRP), 953–962 (DDDRVPRRGM), 963–972 (DDDRGPRRGP), 973–982 (EEDRFSRRGA), 983–992 (DDDRPSWRNT), 993–1002 (DDDRPPRRIA), 1003–1012 (DEDRGNWRHA), 1013–1022 (DDDRPPRRGL), 1023–1032 (DEDRGSWRTA), 1033–1042 (DEDRGPRRGM), 1043–1052 (DDDRGPRRGG), 1054–1063 (DDERSSWRNA), 1064–1073 (DDDRGPRRGL), 1074–1083 (DDDRGPRRGM), 1084–1093 (DDDRGPRRGM), 1094–1103 (DDDRGPRRGM), 1104–1113 (DDDRGPRRGL), 1114–1123 (DDDRGPWRNA), 1124–1133 (DDDRIPRRGA), and 1134–1143 (EDDRGPWRNM). The residue at position 949 (Ser-949) is a Phosphoserine. A Phosphoserine modification is found at Ser-1028. A 23; truncated repeat occupies 1144–1152 (DDDRLSRRA). Copy 24 of the repeat occupies 1153-1162 (DDDRFPRRGD). A 25; approximate repeat occupies 1163–1172 (DSRPGPWRPL). Ser-1188, Ser-1198, Ser-1262, Ser-1336, and Ser-1364 each carry phosphoserine.

In terms of assembly, interacts with EIF4G1. Component of the eukaryotic translation initiation factor 3 (eIF-3) complex, which is composed of 13 subunits: EIF3A, EIF3B, EIF3C, EIF3D, EIF3E, EIF3F, EIF3G, EIF3H, EIF3I, EIF3J, EIF3K, EIF3L and EIF3M. The eIF-3 complex appears to include 3 stable modules: module A is composed of EIF3A, EIF3B, EIF3G and EIF3I; module B is composed of EIF3F, EIF3H, and EIF3M; and module C is composed of EIF3C, EIF3D, EIF3E, EIF3L and EIF3K. EIF3C of module C binds EIF3B of module A and EIF3H of module B, thereby linking the three modules. EIF3J is a labile subunit that binds to the eIF-3 complex via EIF3B. The eIF-3 complex interacts with RPS6KB1 under conditions of nutrient depletion. Mitogenic stimulation leads to binding and activation of a complex composed of MTOR and RPTOR, leading to phosphorylation and release of RPS6KB1 and binding of EIF4B to eIF-3. Also interacts with KRT7 and PIWIL2. Post-translationally, phosphorylated. Phosphorylation is enhanced upon serum stimulation.

Its subcellular location is the cytoplasm. In terms of biological role, RNA-binding component of the eukaryotic translation initiation factor 3 (eIF-3) complex, which is required for several steps in the initiation of protein synthesis. The eIF-3 complex associates with the 40S ribosome and facilitates the recruitment of eIF-1, eIF-1A, eIF-2:GTP:methionyl-tRNAi and eIF-5 to form the 43S pre-initiation complex (43S PIC). The eIF-3 complex stimulates mRNA recruitment to the 43S PIC and scanning of the mRNA for AUG recognition. The eIF-3 complex is also required for disassembly and recycling of post-termination ribosomal complexes and subsequently prevents premature joining of the 40S and 60S ribosomal subunits prior to initiation. The eIF-3 complex specifically targets and initiates translation of a subset of mRNAs involved in cell proliferation, including cell cycling, differentiation and apoptosis, and uses different modes of RNA stem-loop binding to exert either translational activation or repression. Functionally, (Microbial infection) Essential for the initiation of translation on type-1 viral ribosomal entry sites (IRESs), like for HCV, PV, EV71 or BEV translation. Its function is as follows. (Microbial infection) In case of FCV infection, plays a role in the ribosomal termination-reinitiation event leading to the translation of VP2. This chain is Eukaryotic translation initiation factor 3 subunit A, found in Homo sapiens (Human).